The chain runs to 591 residues: V-type ATP synthase alpha chain (591 aa).

242 to 249 (GPFGAGKT) lines the ATP pocket.

This sequence belongs to the ATPase alpha/beta chains family.

The enzyme catalyses ATP + H2O + 4 H(+)(in) = ADP + phosphate + 5 H(+)(out). Functionally, produces ATP from ADP in the presence of a proton gradient across the membrane. The V-type alpha chain is a catalytic subunit. The polypeptide is V-type ATP synthase alpha chain (Chlamydia trachomatis serovar L2 (strain ATCC VR-902B / DSM 19102 / 434/Bu)).